A 342-amino-acid chain; its full sequence is Oxygen-dependent coproporphyrinogen-III oxidase (342 aa).

Ser-107 lines the substrate pocket. Positions 111 and 121 each coordinate a divalent metal cation. The active-site Proton donor is His-121. 123 to 125 (NYR) is a substrate binding site. Residues His-155 and His-185 each coordinate a divalent metal cation. The segment at 277-312 (YVEFNLVYDRGTIFGLQTNGRTESILMSLPPLVRWE) is important for dimerization.

Belongs to the aerobic coproporphyrinogen-III oxidase family. As to quaternary structure, homodimer. A divalent metal cation is required as a cofactor.

It is found in the cytoplasm. It carries out the reaction coproporphyrinogen III + O2 + 2 H(+) = protoporphyrinogen IX + 2 CO2 + 2 H2O. The protein operates within porphyrin-containing compound metabolism; protoporphyrin-IX biosynthesis; protoporphyrinogen-IX from coproporphyrinogen-III (O2 route): step 1/1. Involved in the heme and chlorophyll biosynthesis. Catalyzes the aerobic oxidative decarboxylation of propionate groups of rings A and B of coproporphyrinogen-III to yield the vinyl groups in protoporphyrinogen-IX. In Synechococcus sp. (strain ATCC 27144 / PCC 6301 / SAUG 1402/1) (Anacystis nidulans), this protein is Oxygen-dependent coproporphyrinogen-III oxidase.